Here is a 283-residue protein sequence, read N- to C-terminus: 4-diphosphocytidyl-2-C-methyl-D-erythritol kinase (283 aa).

Lys-10 is a catalytic residue. 99-109 (PMGGGLGGGSS) serves as a coordination point for ATP. Asp-141 is a catalytic residue.

Belongs to the GHMP kinase family. IspE subfamily. As to quaternary structure, homodimer.

The catalysed reaction is 4-CDP-2-C-methyl-D-erythritol + ATP = 4-CDP-2-C-methyl-D-erythritol 2-phosphate + ADP + H(+). The protein operates within isoprenoid biosynthesis; isopentenyl diphosphate biosynthesis via DXP pathway; isopentenyl diphosphate from 1-deoxy-D-xylulose 5-phosphate: step 3/6. Catalyzes the phosphorylation of the position 2 hydroxy group of 4-diphosphocytidyl-2C-methyl-D-erythritol. The protein is 4-diphosphocytidyl-2-C-methyl-D-erythritol kinase of Escherichia coli (strain 55989 / EAEC).